Consider the following 67-residue polypeptide: Cell division protein ZapB (67 aa).

The stretch at 3-59 (LELLSKLETKIQTALETIELLKMELEEEKQKSIGLAEQNQQLSQDLNSWNEKVTGLV) forms a coiled coil.

It belongs to the ZapB family. As to quaternary structure, homodimer. The ends of the coiled-coil dimer bind to each other, forming polymers. Interacts with FtsZ.

It localises to the cytoplasm. Functionally, non-essential, abundant cell division factor that is required for proper Z-ring formation. It is recruited early to the divisome by direct interaction with FtsZ, stimulating Z-ring assembly and thereby promoting cell division earlier in the cell cycle. Its recruitment to the Z-ring requires functional FtsA or ZipA. In Shewanella woodyi (strain ATCC 51908 / MS32), this protein is Cell division protein ZapB.